The chain runs to 110 residues: Large ribosomal subunit protein uL22 (110 aa).

This sequence belongs to the universal ribosomal protein uL22 family. Part of the 50S ribosomal subunit.

This protein binds specifically to 23S rRNA; its binding is stimulated by other ribosomal proteins, e.g. L4, L17, and L20. It is important during the early stages of 50S assembly. It makes multiple contacts with different domains of the 23S rRNA in the assembled 50S subunit and ribosome. In terms of biological role, the globular domain of the protein is located near the polypeptide exit tunnel on the outside of the subunit, while an extended beta-hairpin is found that lines the wall of the exit tunnel in the center of the 70S ribosome. The protein is Large ribosomal subunit protein uL22 of Nitrosomonas europaea (strain ATCC 19718 / CIP 103999 / KCTC 2705 / NBRC 14298).